The following is a 525-amino-acid chain: Ribonuclease III domain-containing protein RNC1, chloroplastic (525 aa).

A chloroplast-targeting transit peptide spans 1-28 (MGPPAMAFQALTLTPLPFSLHSSSRRVR). RNase III domains lie at 125-271 (LLEA…LCFG) and 403-503 (EHPR…CVYG).

As to quaternary structure, interacts with RNA. Part of large ribonucleo-protein particles that contain CAF1 and/or CAF2.

The protein localises to the plastid. It localises to the chloroplast stroma. Its function is as follows. Binds specific group II introns in chloroplasts and facilitates their splicing. Acts on both subgroup IIA and subgroup IIB introns. The substrates of the subgroup II also require the CRM domain proteins CAF1 or CAF2. Binds both single-stranded and double-stranded RNA non-specifically, but lacks endonuclease activity. Required for plastid ribosome biogenesis. The sequence is that of Ribonuclease III domain-containing protein RNC1, chloroplastic from Zea mays (Maize).